Reading from the N-terminus, the 119-residue chain is Large ribosomal subunit protein bL20 (119 aa).

The protein belongs to the bacterial ribosomal protein bL20 family.

Its function is as follows. Binds directly to 23S ribosomal RNA and is necessary for the in vitro assembly process of the 50S ribosomal subunit. It is not involved in the protein synthesizing functions of that subunit. The sequence is that of Large ribosomal subunit protein bL20 from Vesicomyosocius okutanii subsp. Calyptogena okutanii (strain HA).